The sequence spans 431 residues: MSLPIARIATISVHTSPLDQPGTGDAGGMNVYIVEIAKRLAARGVEVDIFTRATSRELPPVAELVSGVQVRHVVSGPFEELDKTELAGELCAFTSGVLRAEAAHDPGHYDLLHTHYWLSGQVGWVAKQRWGVPLVHSMHTMAKVKNAALAEGDTPEPAIRVLGEEQVTAGADRLVANTAEEARQLVELYGADPDRVGVVTPGVDLSLFRPRNGLLRGGADQARRRLGLPRDAYLLLFVGRIQPLKAPDVLLRAAALMVEADPALREHLVVAVVGGPSGSGRARPEGLQKLATELGIADLVRFEPPCPQPLLAEWYRAADVTVVPSHNESFGLVAAESQACGTPVVAAAVGGLRTAVRDGESGVLIDGHDPADYAAVLTRLRDEPRRRERLAAGAVRHARTLGWDATVDRLLEVYTGAKDTVNATAAGVLPR.

Histidine 14 lines the 1D-myo-inositol 3-phosphate pocket. Residues 20–21 and glycine 28 each bind UDP-N-acetyl-alpha-D-glucosamine; that span reads QP. 1D-myo-inositol 3-phosphate-binding positions include 25–30, lysine 83, tyrosine 116, threonine 140, and arginine 160; that span reads DAGGMN. Arginine 240 and lysine 245 together coordinate UDP-N-acetyl-alpha-D-glucosamine. Positions 315, 316, and 318 each coordinate Mg(2+). Residues glutamate 328 and glutamate 336 each coordinate UDP-N-acetyl-alpha-D-glucosamine. Threonine 342 contacts Mg(2+).

This sequence belongs to the glycosyltransferase group 1 family. MshA subfamily. Homodimer.

It carries out the reaction 1D-myo-inositol 3-phosphate + UDP-N-acetyl-alpha-D-glucosamine = 1D-myo-inositol 2-acetamido-2-deoxy-alpha-D-glucopyranoside 3-phosphate + UDP + H(+). In terms of biological role, catalyzes the transfer of a N-acetyl-glucosamine moiety to 1D-myo-inositol 3-phosphate to produce 1D-myo-inositol 2-acetamido-2-deoxy-glucopyranoside 3-phosphate in the mycothiol biosynthesis pathway. In Thermomonospora curvata (strain ATCC 19995 / DSM 43183 / JCM 3096 / KCTC 9072 / NBRC 15933 / NCIMB 10081 / Henssen B9), this protein is D-inositol 3-phosphate glycosyltransferase.